The following is a 324-amino-acid chain: Methionyl-tRNA formyltransferase (324 aa).

A (6S)-5,6,7,8-tetrahydrofolate-binding site is contributed by 114–117; it reads SLLP.

This sequence belongs to the Fmt family.

The catalysed reaction is L-methionyl-tRNA(fMet) + (6R)-10-formyltetrahydrofolate = N-formyl-L-methionyl-tRNA(fMet) + (6S)-5,6,7,8-tetrahydrofolate + H(+). Its function is as follows. Attaches a formyl group to the free amino group of methionyl-tRNA(fMet). The formyl group appears to play a dual role in the initiator identity of N-formylmethionyl-tRNA by promoting its recognition by IF2 and preventing the misappropriation of this tRNA by the elongation apparatus. This chain is Methionyl-tRNA formyltransferase, found in Azobacteroides pseudotrichonymphae genomovar. CFP2.